Here is a 95-residue protein sequence, read N- to C-terminus: Small ribosomal subunit protein bS6 (95 aa).

It belongs to the bacterial ribosomal protein bS6 family.

In terms of biological role, binds together with bS18 to 16S ribosomal RNA. In Clostridium kluyveri (strain NBRC 12016), this protein is Small ribosomal subunit protein bS6.